A 360-amino-acid chain; its full sequence is POU domain, class 5, transcription factor 1 (360 aa).

Disordered regions lie at residues 1-48 (MAGH…SGIG) and 86-137 (PPGG…EESQ). Positions 4 to 12 (HLASDFAFS) match the 9aaTAD motif. Residue S111 is modified to Phosphoserine; by MAPK. A Glycyl lysine isopeptide (Lys-Gly) (interchain with G-Cter in SUMO) cross-link involves residue K123. The segment covering 123–137 (KLDKEKLEPNPEESQ) has biased composition (basic and acidic residues). In terms of domain architecture, POU-specific spans 138–212 (DIKALQKDLE…LLQKWVEEAD (75 aa)). Residues R157 and Q164 each coordinate DNA. DNA-binding regions lie at residues 180 to 186 (SQTTICR) and 193 to 196 (SFKN). Residues 230–289 (RKRKRTSIENRVRGNLESMFLQCPKPTLQQISHIAQQLGLEKDVVRVWFCNRRQKGKRSS) constitute a DNA-binding region (homeobox). T235 is modified (phosphothreonine). Residues S236, S289, S290, and S355 each carry the phosphoserine modification. Positions 287 to 322 (RSSSDYSQREDFEAAGSPFTGGPVSSPLAPGPHFGT) are disordered.

It belongs to the POU transcription factor family. Class-5 subfamily. In terms of assembly, interacts with PKM. Interacts with WWP2. Interacts with UBE2I and ZSCAN10. Interacts with PCGF1. Interacts with ESRRB; recruits ESRRB near the POU5F1-SOX2 element in the NANOG proximal promoter; the interaction is DNA independent. Interacts with MAPK8 and MAPK9; the interaction allows MAPK8 and MAPK9 to phosphorylate POU5F1 on Ser-355. Interacts (when phosphorylated on Ser-355) with FBXW8. Interacts with FBXW4. Interacts with SOX2 and SOX15; binds synergistically with either SOX2 or SOX15 to DNA. Interacts with DDX56. In terms of processing, sumoylation enhances the protein stability, DNA binding and transactivation activity. Sumoylation is required for enhanced YES1 expression. Ubiquitinated; undergoes 'Lys-63'-linked polyubiquitination by WWP2 leading to proteasomal degradation. Post-translationally, ERK1/2-mediated phosphorylation at Ser-111 promotes nuclear exclusion and proteasomal degradation. Phosphorylation at Thr-235 and Ser-236 decrease DNA-binding and alters ability to activate transcription. As to expression, expressed in immature oocytes.

The protein localises to the cytoplasm. It localises to the nucleus. In terms of biological role, transcription factor that binds to the octamer motif (5'-ATTTGCAT-3'). Forms a trimeric complex with SOX2 or SOX15 on DNA and controls the expression of a number of genes involved in embryonic development such as YES1, FGF4, UTF1 and ZFP206. Critical for early embryogenesis and for embryonic stem cell pluripotency. The protein is POU domain, class 5, transcription factor 1 (POU5F1) of Bos taurus (Bovine).